The chain runs to 163 residues: Nucleotide-binding protein CGSHiGG_08790 (163 aa).

Belongs to the YajQ family.

Its function is as follows. Nucleotide-binding protein. The protein is Nucleotide-binding protein CGSHiGG_08790 of Haemophilus influenzae (strain PittGG).